The chain runs to 451 residues: MEAAAAMEAGRKLAARHPHGRSRTAHNMSSSSLRKKSDAALVRKVPVAPLRPLLANLQEVFLATKLAVLFPAVPLAIAAQCFRFDQVWVFALSLLGLIPLAERVSFLTEQIALYTGPTVGGLLNATCGNATELIIALFALLKGKIEVVKCSLLGSVLSNLLLVLGTSLFCGGVVNLGARQPYDRNQSDVSTALLFLAVLCHSAPLLLRYAVAAGEHSVSATSAAASLDLSRACSFVMLASYVAYLFFQLKTHRQLFEPQEVDGGDAGDDDEEPALGFASALFWLALMTAVISVLSEYVVGTIEPTSQSWGLSVSFISIILLPIVGNAAEHAGAIIFALKNKLDITLGVALGSATQISMFVVPLSVLVAWIMGVQMDLDFKLLETGSLFMAVLVTAFTLQDGTSHYLKGILLLLCYIVIGACFFVARQPAGHANSNGALLDVPTGSMSVQAA.

The Cytoplasmic segment spans residues 1–58 (MEAAAAMEAGRKLAARHPHGRSRTAHNMSSSSLRKKSDAALVRKVPVAPLRPLLANLQ). The interval 9–37 (AGRKLAARHPHGRSRTAHNMSSSSLRKKS) is disordered. A compositionally biased stretch (basic residues) spans 13–24 (LAARHPHGRSRT). The helical transmembrane segment at 59 to 79 (EVFLATKLAVLFPAVPLAIAA) threads the bilayer. The Vacuolar segment spans residues 80–86 (QCFRFDQ). A helical transmembrane segment spans residues 87-107 (VWVFALSLLGLIPLAERVSFL). Topologically, residues 108–120 (TEQIALYTGPTVG) are cytoplasmic. Residues 121–141 (GLLNATCGNATELIIALFALL) traverse the membrane as a helical segment. The cation selection stretch occupies residues 128–163 (GNATELIIALFALLKGKIEVVKCSLLGSVLSNLLLV). The Vacuolar segment spans residues 142 to 153 (KGKIEVVKCSLL). The chain crosses the membrane as a helical span at residues 154-174 (GSVLSNLLLVLGTSLFCGGVV). Residues 175–191 (NLGARQPYDRNQSDVST) are Cytoplasmic-facing. Residues 192–212 (ALLFLAVLCHSAPLLLRYAVA) traverse the membrane as a helical segment. Residues 213–228 (AGEHSVSATSAAASLD) are Vacuolar-facing. The helical transmembrane segment at 229–249 (LSRACSFVMLASYVAYLFFQL) threads the bilayer. The Cytoplasmic portion of the chain corresponds to 250 to 273 (KTHRQLFEPQEVDGGDAGDDDEEP). A helical transmembrane segment spans residues 274–294 (ALGFASALFWLALMTAVISVL). The Vacuolar segment spans residues 295-317 (SEYVVGTIEPTSQSWGLSVSFIS). A helical transmembrane segment spans residues 318–338 (IILLPIVGNAAEHAGAIIFAL). The interval 325–360 (GNAAEHAGAIIFALKNKLDITLGVALGSATQISMFV) is cation selection. At 339–352 (KNKLDITLGVALGS) the chain is on the cytoplasmic side. A helical membrane pass occupies residues 353–373 (ATQISMFVVPLSVLVAWIMGV). Residues 374 to 378 (QMDLD) are Vacuolar-facing. A helical membrane pass occupies residues 379–399 (FKLLETGSLFMAVLVTAFTLQ). The Cytoplasmic segment spans residues 400-404 (DGTSH). The chain crosses the membrane as a helical span at residues 405–425 (YLKGILLLLCYIVIGACFFVA). At 426-451 (RQPAGHANSNGALLDVPTGSMSVQAA) the chain is on the vacuolar side.

Belongs to the Ca(2+):cation antiporter (CaCA) (TC 2.A.19) family. Cation/proton exchanger (CAX) subfamily. In terms of tissue distribution, ubiquitous.

The protein resides in the vacuole membrane. Vacuolar cation/proton exchanger (CAX). Translocates Ca(2+) and other metal ions into vacuoles using the proton gradient formed by H(+)-ATPase and H(+)-pyrophosphatase. This Oryza sativa subsp. japonica (Rice) protein is Vacuolar cation/proton exchanger 1a (CAX1a).